A 361-amino-acid chain; its full sequence is Probable cadicidin biosynthesis thioesterase (361 aa).

Residues 2–29 enclose the 4Fe-4S ferredoxin-type domain; the sequence is RVTVDSEQCVGAGQCVLNAPEVFDQDDD. A disordered region spans residues 36 to 110; that stretch reads RADPTSGTTR…RRDSPVTTAD (75 aa). Positions 46–61 are enriched in basic residues; sequence RSARRATCARRPRSSS. 2 stretches are compositionally biased toward basic and acidic residues: residues 62–74 and 94–104; these read RRTE…DRHR and TDRRQNHRRDS. Residue S201 is part of the active site.

This sequence belongs to the thioesterase family.

Its pathway is antibiotic biosynthesis; candicidin biosynthesis. In terms of biological role, probable thioesterase involved in the biosynthesis of candicidin. Could release the macrolide ring from the polyketide synthase. The protein is Probable cadicidin biosynthesis thioesterase of Streptomyces griseus.